We begin with the raw amino-acid sequence, 363 residues long: Chalcone synthase B (363 aa).

Cys-170 is an active-site residue.

This sequence belongs to the thiolase-like superfamily. Chalcone/stilbene synthases family.

It carries out the reaction (E)-4-coumaroyl-CoA + 3 malonyl-CoA + 3 H(+) = 2',4,4',6'-tetrahydroxychalcone + 3 CO2 + 4 CoA. It participates in secondary metabolite biosynthesis; flavonoid biosynthesis. In terms of biological role, the primary product of this enzyme is 4,2',4',6'-tetrahydroxychalcone (also termed naringenin-chalcone or chalcone) which can under specific conditions spontaneously isomerize into naringenin. The sequence is that of Chalcone synthase B (CHSB) from Ipomoea nil (Japanese morning glory).